The following is a 235-amino-acid chain: Probable ribonuclease P protein subunit 3 (235 aa).

Belongs to the eukaryotic/archaeal RNase P protein component 3 family.

It localises to the nucleus. It catalyses the reaction Endonucleolytic cleavage of RNA, removing 5'-extranucleotides from tRNA precursor.. In terms of biological role, part of ribonuclease P, a protein complex that generates mature tRNA molecules by cleaving their 5'-ends. The sequence is that of Probable ribonuclease P protein subunit 3 from Schizosaccharomyces pombe (strain 972 / ATCC 24843) (Fission yeast).